Consider the following 237-residue polypeptide: Cyclic-di-GMP-binding biofilm dispersal mediator protein (237 aa).

10–34 (LILGGSRGIGAAIVRRFVTDGANVR) provides a ligand contact to NAD(+). Serine 132 serves as a coordination point for substrate. Tyrosine 146 serves as the catalytic Proton acceptor.

Belongs to the short-chain dehydrogenases/reductases (SDR) family.

Its function is as follows. Increases biofilm dispersal. Acts by binding directly to the signaling molecule cyclic-di-GMP, which decreases the intracellular concentration of cyclic-di-GMP and leads to biofilm dispersal. Also controls other biofilm-related phenotypes such as cell motility, cell size, cell aggregation and production of extracellular DNA and extracellular polysaccharides (EPS). Does not act as a phosphodiesterase. This chain is Cyclic-di-GMP-binding biofilm dispersal mediator protein (bdcA), found in Escherichia coli (strain K12).